A 220-amino-acid chain; its full sequence is Probable GTP-binding protein EngB (220 aa).

The EngB-type G domain maps to 24–207; sequence PQPEVAFAGR…HELIESWIAP (184 aa). GTP-binding positions include 32–39, 59–63, 81–84, 148–151, and 185–188; these read GRSNAGKS, GRTQH, DLPG, TKCD, and LFSA. Mg(2+) is bound by residues S39 and T61.

This sequence belongs to the TRAFAC class TrmE-Era-EngA-EngB-Septin-like GTPase superfamily. EngB GTPase family. It depends on Mg(2+) as a cofactor.

In terms of biological role, necessary for normal cell division and for the maintenance of normal septation. This chain is Probable GTP-binding protein EngB, found in Paraburkholderia phymatum (strain DSM 17167 / CIP 108236 / LMG 21445 / STM815) (Burkholderia phymatum).